Reading from the N-terminus, the 145-residue chain is Beta sliding clamp (145 aa).

Belongs to the beta sliding clamp family. As to quaternary structure, forms a ring-shaped head-to-tail homodimer around DNA which binds and tethers DNA polymerases and other proteins to the DNA. The DNA replisome complex has a single clamp-loading complex (3 tau and 1 each of delta, delta', psi and chi subunits) which binds 3 Pol III cores (1 core on the leading strand and 2 on the lagging strand) each with a beta sliding clamp dimer. Additional proteins in the replisome are other copies of gamma, psi and chi, Ssb, DNA helicase and RNA primase.

It localises to the cytoplasm. In terms of biological role, confers DNA tethering and processivity to DNA polymerases and other proteins. Acts as a clamp, forming a ring around DNA (a reaction catalyzed by the clamp-loading complex) which diffuses in an ATP-independent manner freely and bidirectionally along dsDNA. Initially characterized for its ability to contact the catalytic subunit of DNA polymerase III (Pol III), a complex, multichain enzyme responsible for most of the replicative synthesis in bacteria; Pol III exhibits 3'-5' exonuclease proofreading activity. The beta chain is required for initiation of replication as well as for processivity of DNA replication. The protein is Beta sliding clamp (dnaN) of Vibrio harveyi (Beneckea harveyi).